We begin with the raw amino-acid sequence, 472 residues long: Probable diguanylate cyclase DgcF (472 aa).

A run of 8 helical transmembrane segments spans residues 21 to 41 (SIAIFALTTLFYFIGAELRLV), 44 to 64 (LSLFWPLNGVMAGVFARYVWL), 90 to 110 (VSLAINFSNMMFIVTVALLVV), 128 to 148 (LFNYCLIAALLCAIVGAIGSV), 167 to 187 (FSTGVLIVPCMLTLAIPGVLP), 198 to 218 (IALIVSVIASVVIGGAGSLAF), 237 to 257 (LLTFVTGAVEIVLVANSVIDI), and 273 to 293 (LGIATMAICPIMVSFSVAAIN). A GGDEF domain is found at 330–467 (QHLTVMLLDI…GRNRTSTMRY (138 aa)). Mg(2+) contacts are provided by Asp338 and Ile339. 3 residues coordinate substrate: Asn346, His351, and Asp355. Residue Glu381 coordinates Mg(2+).

Homodimer. It depends on Mg(2+) as a cofactor.

Its subcellular location is the cell membrane. The catalysed reaction is 2 GTP = 3',3'-c-di-GMP + 2 diphosphate. It participates in purine metabolism; 3',5'-cyclic di-GMP biosynthesis. In terms of biological role, catalyzes the synthesis of cyclic-di-GMP (c-di-GMP) via the condensation of 2 GTP molecules. The polypeptide is Probable diguanylate cyclase DgcF (Escherichia coli O157:H7).